The chain runs to 302 residues: Protoheme IX farnesyltransferase (302 aa).

9 helical membrane-spanning segments follow: residues 27 to 47 (VVAL…PGMV), 53 to 73 (LFGL…NHVI), 100 to 120 (LVFA…AVNV), 121 to 141 (LTAV…TVFL), 149 to 169 (IVWG…AVTG), 175 to 195 (PLLL…ALAI), 215 to 235 (VAFT…VSLV), 237 to 257 (FIIH…GIGF), and 273 to 293 (AMPT…LLLV).

The protein belongs to the UbiA prenyltransferase family. Protoheme IX farnesyltransferase subfamily.

It is found in the cell inner membrane. It catalyses the reaction heme b + (2E,6E)-farnesyl diphosphate + H2O = Fe(II)-heme o + diphosphate. It participates in porphyrin-containing compound metabolism; heme O biosynthesis; heme O from protoheme: step 1/1. Functionally, converts heme B (protoheme IX) to heme O by substitution of the vinyl group on carbon 2 of heme B porphyrin ring with a hydroxyethyl farnesyl side group. This is Protoheme IX farnesyltransferase from Thioalkalivibrio sulfidiphilus (strain HL-EbGR7).